The sequence spans 101 residues: Large ribosomal subunit protein uL23 (101 aa).

Belongs to the universal ribosomal protein uL23 family. In terms of assembly, part of the 50S ribosomal subunit. Contacts protein L29, and trigger factor when it is bound to the ribosome.

Its function is as follows. One of the early assembly proteins it binds 23S rRNA. One of the proteins that surrounds the polypeptide exit tunnel on the outside of the ribosome. Forms the main docking site for trigger factor binding to the ribosome. This chain is Large ribosomal subunit protein uL23, found in Kocuria rhizophila (strain ATCC 9341 / DSM 348 / NBRC 103217 / DC2201).